Here is a 516-residue protein sequence, read N- to C-terminus: Glycerol-3-phosphate dehydrogenase 1 (516 aa).

28-56 (DVIVIGGGITGVGIALDAATRGLTVALVE) is an FAD binding site.

It belongs to the FAD-dependent glycerol-3-phosphate dehydrogenase family. The cofactor is FAD.

Its subcellular location is the cytoplasm. It carries out the reaction a quinone + sn-glycerol 3-phosphate = dihydroxyacetone phosphate + a quinol. This Mycobacterium bovis (strain ATCC BAA-935 / AF2122/97) protein is Glycerol-3-phosphate dehydrogenase 1 (glpD1).